The primary structure comprises 91 residues: Protein SPATA45 homolog (91 aa).

The interval 42–91 is disordered; that stretch reads RADRKHDPNGFNSSVFKGASNQHQESSLDFATAEPEFHRERRHFPEKSEY. Residues 51-70 are compositionally biased toward polar residues; sequence GFNSSVFKGASNQHQESSLD. Residues 76-91 are compositionally biased toward basic and acidic residues; sequence PEFHRERRHFPEKSEY.

The protein belongs to the SPATA45 family.

This is Protein SPATA45 homolog from Nematostella vectensis (Starlet sea anemone).